Consider the following 463-residue polypeptide: Glutamate--tRNA ligase (463 aa).

The 'HIGH' region motif lies at 8-18 (PSPTGYLHIGG). The 'KMSKS' region motif lies at 236–240 (RLSKR). Lysine 239 contacts ATP.

Belongs to the class-I aminoacyl-tRNA synthetase family. Glutamate--tRNA ligase type 1 subfamily. In terms of assembly, monomer.

It is found in the cytoplasm. The enzyme catalyses tRNA(Glu) + L-glutamate + ATP = L-glutamyl-tRNA(Glu) + AMP + diphosphate. In terms of biological role, catalyzes the attachment of glutamate to tRNA(Glu) in a two-step reaction: glutamate is first activated by ATP to form Glu-AMP and then transferred to the acceptor end of tRNA(Glu). The sequence is that of Glutamate--tRNA ligase from Nitrosomonas eutropha (strain DSM 101675 / C91 / Nm57).